Here is a 478-residue protein sequence, read N- to C-terminus: MSRGTIYTESTMDFQKVRKIQFGLLDPKEIQAMSVVQVENEKIYDNGIPTDGGINDLRMGTMEKAMRCSTCQGDSKECPGHFGHIELAQPVFHIGFIDLVKKILKCVCFNCNKLLITDKHDKYSALKRVKDPKLKLNKVYKVCKDIKVCGKADRKSETYTEGSGQKQPRLRKTGLKIKAEFPIDEDDPSTNDNKRDLSASECLKILGRISPDDCKFLGFDMVLARPEWLIISRLPVAPPPVRPSVCMGSNIRQEDDLTHQYQQILKANNQLRKHLSTANHIINENYQLLQFYCATLIDNEQAGQMVSRHKSGGKAIKAIRARLKGKEGRLRGNLMGKRVDFSARTVITCDPTLDLDQLGVPRSIAENITIPEVVTPQNIDEMRKLVINGPNKWPGAKYIKGEGGKMIDLSYAKTTETFIDYGYVIERHLKNDDFVLFNRQPSLHKMSIMGHRVKVLPYSTFRLNLSVTAPYNADFDGS.

Zn(2+) is bound by residues cysteine 68, cysteine 71, cysteine 78, histidine 81, cysteine 108, cysteine 111, and cysteine 149. Positions 474 and 476 each coordinate Mg(2+).

This sequence belongs to the RNA polymerase beta' chain family. As to quaternary structure, component of the RNA polymerase II (Pol II) complex consisting of 12 subunits. In terms of processing, phosphorylation activates POL II.

The protein localises to the nucleus. It catalyses the reaction RNA(n) + a ribonucleoside 5'-triphosphate = RNA(n+1) + diphosphate. Functionally, DNA-dependent RNA polymerase catalyzes the transcription of DNA into RNA using the four ribonucleoside triphosphates as substrates. Largest and catalytic component of RNA polymerase II which synthesizes mRNA precursors and many functional non-coding RNAs. Forms the polymerase active center together with the second largest subunit. Pol II is the central component of the basal RNA polymerase II transcription machinery. It is composed of mobile elements that move relative to each other. RPB1 is part of the core element with the central large cleft, the clamp element that moves to open and close the cleft and the jaws that are thought to grab the incoming DNA template. At the start of transcription, a single-stranded DNA template strand of the promoter is positioned within the central active site cleft of Pol II. A bridging helix emanates from RPB1 and crosses the cleft near the catalytic site and is thought to promote translocation of Pol II by acting as a ratchet that moves the RNA-DNA hybrid through the active site by switching from straight to bent conformations at each step of nucleotide addition. During transcription elongation, Pol II moves on the template as the transcript elongates. Elongation is influenced by the phosphorylation status of the C-terminal domain (CTD) of Pol II largest subunit (RPB1), which serves as a platform for assembly of factors that regulate transcription initiation, elongation, termination and mRNA processing. This Euplotoides octocarinatus (Freshwater ciliate) protein is DNA-directed RNA polymerase II subunit RPB1 (RPB1).